The following is a 559-amino-acid chain: MASSNLLLEVQFLHIPSLSQKQANPLSCRKFSSLDWKQEIGLKKDVFFRCHGLLSSVCIDNVNDHAERSSEFHHYGVGTNLRARVKPMKQFGLSSDGPITENDEETNNEILHNLCSNGKLTDACKLVEVMARHNQVPHFPSCSNLVRGLARIDQLDKAMCILRVMVMSGGVPDTITYNMIIGNLCKKGHIRTALVLLEDMSLSGSPPDVITYNTVIRCMFDYGNAEQAIRFWKDQLQNGCPPFMITYTVLVELVCRYCGSARAIEVLEDMAVEGCYPDIVTYNSLVNYNCRRGNLEEVASVIQHILSHGLELNTVTYNTLLHSLCSHEYWDEVEEILNIMYQTSYCPTVITYNILINGLCKARLLSRAIDFFYQMLEQKCLPDIVTYNTVLGAMSKEGMVDDAIELLGLLKNTCCPPGLITYNSVIDGLAKKGLMKKALELYHQMLDAGIFPDDITRRSLIYGFCRANLVEEAGQVLKETSNRGNGIRGSTYRLVIQGLCKKKEIEMAIEVVEIMLTGGCKPDETIYTAIVKGVEEMGMGSEAVQLQKKLKQWKLLKEV.

13 PPR repeats span residues 103-137 (DEET…NQVP), 138-172 (HFPS…GGVP), 173-207 (DTIT…GSPP), 208-242 (DVIT…GCPP), 243-277 (FMIT…GCYP), 278-312 (DIVT…GLEL), 313-347 (NTVT…SYCP), 348-382 (TVIT…KCLP), 383-417 (DIVT…CCPP), 418-452 (GLIT…GIFP), 453-487 (DDIT…GNGI), 488-522 (RGST…GCKP), and 523-557 (DETI…KLLK).

This sequence belongs to the PPR family. P subfamily.

This chain is Pentatricopeptide repeat-containing protein At1g08610, found in Arabidopsis thaliana (Mouse-ear cress).